The chain runs to 7096 residues: Replicase polyprotein 1ab (7096 aa).

The tract at residues 1-147 is disordered; the sequence is MESLVPGFNE…ADLKSFDLGD (147 aa). At 1-2225 the chain is on the cytoplasmic side; sequence MESLVPGFNE…NYLKSPNFSK (2225 aa). The 116-residue stretch at 12–127 folds into the CoV Nsp1 globular domain; that stretch reads THVQLSLPVL…YRKVLLRKNG (116 aa). In terms of domain architecture, BetaCoV Nsp1 C-terminal spans 148-179; the sequence is ELGTDPYEDFQENWNTKHSSGVTRELMRELNG. The interval 154-180 is binding to 40s ribosome mRNA entry channel; it reads YEDFQENWNTKHSSGVTRELMRELNGG. One can recognise a CoV Nsp2 N-terminal domain in the interval 183–456; sequence TRYVDNNFCG…NDNLLEILQK (274 aa). Zn(2+) is bound by residues Cys-200, Cys-231, His-234, His-236, Cys-323, Cys-326, Cys-341, Cys-344, Cys-370, Cys-373, His-382, and Cys-416. The tract at residues 200 to 236 is C2H2; sequence CIKDLLARAGKASCTLSEQLDFIDTKRGVYCCREHEH. The C4 stretch occupies residues 323–344; it reads CDHCGETSWQTGDFVKATCEFC. Residues 370-416 are C2HC; the sequence is CPACHNSEVGPEHSLAEYHNESGLKTILRKGGRTIAFGGCVFSYVGC. In terms of domain architecture, CoV Nsp2 middle spans 458-688; sequence KVNINIVGDF…FKLVNKFLAL (231 aa). 2 LRR repeats span residues 545-569 and 697-719; these read RSIF…AITI and GAKL…LYRK. The CoV Nsp2 C-terminal domain maps to 690 to 818; the sequence is ADSIIIGGAK…TNNTFTLKGG (129 aa). Positions 821–929 constitute a Ubiquitin-like 1 domain; it reads TKVTFGDDTV…MYCSFYPPDE (109 aa). A disordered region spans residues 926 to 999; that stretch reads PPDEDEEEGD…QQDGSEDNQT (74 aa). Acidic residues-rich tracts occupy residues 927 to 942 and 971 to 984; these read PDED…EEFE and PEEE…DDDS. 3 Macro domains span residues 1025-1194, 1231-1359, and 1367-1494; these read VNSF…LEMK, KIKA…LPSI, and ILGT…TSSS. The 66-residue stretch at 1496–1561 folds into the DPUP domain; it reads TPEEHFIETI…TFDNLKTLLS (66 aa). The 56-residue stretch at 1565–1620 folds into the Ubiquitin-like 2 domain; that stretch reads VRTIKVFTTVDNINLHTQVVDMSMTYGQQFGPTYLDGADVTKIKPHNSHEGKTFYV. One can recognise a Peptidase C16 domain in the interval 1634-1898; it reads YYHTTDPSFL…CTEIDPKLDN (265 aa). Cys-1674 functions as the For PL-PRO activity in the catalytic mechanism. The LRR 3 repeat unit spans residues 1680-1702; the sequence is LLTLQQIELKFNPPALQDAYYRA. Zn(2+)-binding residues include Cys-1752, Cys-1755, Cys-1787, and Cys-1789. The C4-type zinc-finger motif lies at 1752-1789; that stretch reads CKTCGQQQTTLKGVEAVMYMGTLSYEQFKKGVQIPCTC. Active-site for PL-PRO activity residues include His-1835 and Asp-1849. The region spanning 1911-2021 is the Nucleic acid-binding domain; it reads PIDLVPNQPY…CLWSTKPVET (111 aa). The G2M domain maps to 2046–2155; sequence PVSEEVVENP…LNKVVSTTTN (110 aa). A helical transmembrane segment spans residues 2226 to 2246; that stretch reads LINIIIWFLLLSVCLGSLIYS. The Lumenal segment spans residues 2247–2317; sequence TAALGVLMSN…QITISSFKWD (71 aa). One can recognise a 3Ecto domain in the interval 2247-2317; sequence TAALGVLMSN…QITISSFKWD (71 aa). Intrachain disulfides connect Cys-2263/Cys-2291 and Cys-2282/Cys-2288. Residues 2318–2338 traverse the membrane as a helical segment; that stretch reads LTAFGLVAEWFLAYILFTRFF. The Cytoplasmic segment spans residues 2339–2775; that stretch reads YVLGLAAIMQ…VNNWLKQLIK (437 aa). Residues 2395–2485 are Y1; it reads KSYVHVVDGC…QFKRPINPTD (91 aa). One can recognise a CoV Nsp3 Y domain in the interval 2395–2763; sequence KSYVHVVDGC…VTTKIALKGG (369 aa). Zn(2+)-binding residues include His-2399, Cys-2404, Cys-2409, Cys-2412, Cys-2445, His-2448, Cys-2452, and Cys-2455. The segment at 2399–2412 is ZF1; it reads HVVDGCNSSTCMMC. Positions 2445-2455 are ZF2; that stretch reads CKLHNWNCVNC. The Y2 stretch occupies residues 2486-2580; it reads QSSYIVDSVT…LLDQALVSDV (95 aa). A coV-Y region spans residues 2486-2763; that stretch reads QSSYIVDSVT…VTTKIALKGG (278 aa). The segment at 2581–2662 is Y3; that stretch reads GDSAEVAVKM…ECLKLSHQSD (82 aa). The segment at 2663-2763 is Y4; that stretch reads IEVTGDSCNN…VTTKIALKGG (101 aa). The chain crosses the membrane as a helical span at residues 2776–2796; the sequence is VTLVFLFVAAIFYLITPVHVM. Over 2797–3044 the chain is Lumenal; that stretch reads SKHTDFSSEI…IQPIGALDIS (248 aa). A helical transmembrane segment spans residues 3045 to 3065; that stretch reads ASIVAGGIVAIVVTCLAYYFM. Topologically, residues 3066–3099 are cytoplasmic; it reads RFRRAFGEYSHVVAFNTLLFLMSFTVLCLTPVYS. Residues 3100 to 3120 traverse the membrane as a helical segment; sequence FLPGVYSVIYLYLTFYLTNDV. Topologically, residues 3121–3127 are lumenal; sequence SFLAHIQ. The helical transmembrane segment at 3128 to 3148 threads the bilayer; that stretch reads WMVMFTPLVPFWITIAYIICI. The Cytoplasmic segment spans residues 3149–3586; it reads STKHFYWFFS…KGTHHWLLLT (438 aa). The 99-residue stretch at 3165 to 3263 folds into the Nsp4C domain; the sequence is VVFNGVSFST…QTSITSAVLQ (99 aa). An LRR 4 repeat occupies 3185 to 3206; the sequence is LNKEMYLKLRSDVLLPLTQYNR. Residues 3264–3569 enclose the Peptidase C30 domain; the sequence is SGFRKMAFPS…VRQCSGVTFQ (306 aa). Residue Lys-3268 forms a Glycyl lysine isopeptide (Lys-Gly) (interchain with G-Cter in ubiquitin) linkage. His-3304 functions as the For 3CL-PRO activity in the catalytic mechanism. A Glycyl lysine isopeptide (Lys-Gly) (interchain with G-Cter in ubiquitin) cross-link involves residue Lys-3353. Cys-3408 functions as the Nucleophile; for 3CL-PRO activity in the catalytic mechanism. Residues 3587-3607 traverse the membrane as a helical segment; sequence ILTSLLVLVQSTQWSLFFFLY. Glu-3608 is a topological domain (lumenal). Residues 3609 to 3629 traverse the membrane as a helical segment; the sequence is NAFLPFAMGIIAMSAFAMMFV. Topologically, residues 3630–3634 are cytoplasmic; that stretch reads KHKHA. Residues 3635-3655 traverse the membrane as a helical segment; it reads FLCLFLLPSLATVAYFNMVYM. The Lumenal portion of the chain corresponds to 3656–3673; that stretch reads PASWVMRIMTWLDMVDTS. Residues 3674–3694 form a helical membrane-spanning segment; the sequence is LSGFKLKDCVMYASAVVLLIL. Residues 3695 to 3729 are Cytoplasmic-facing; that stretch reads MTARTVYDDGARRVWTLMNVLTLVYKVYYGNALDQ. Residues 3730-3750 form a helical membrane-spanning segment; that stretch reads AISMWALIISVTSNYSGVVTT. The Lumenal segment spans residues 3751–3778; that stretch reads VMFLARGIVFMCVEYCPIFFITGNTLQC. The helical transmembrane segment at 3779–3799 threads the bilayer; the sequence is IMLVYCFLGYFCTCYFGLFCL. Residues 3800–7096 lie on the Cytoplasmic side of the membrane; sequence LNRYFRLTLG…VISSDVLVNN (3297 aa). In terms of domain architecture, RdRp Nsp7 cofactor spans 3860–3942; it reads SKMSDVKCTS…EMLDNRATLQ (83 aa). A disordered region spans residues 3931-4020; sequence CEEMLDNRAT…QMYKQARSED (90 aa). 2 LRR repeats span residues 3935–3959 and 3977–4004; these read LDNR…AFAT and LKKL…LEKM. The RdRp Nsp8 cofactor domain maps to 3943–4140; it reads AIASEFSSLP…LRANSAVKLQ (198 aa). Positions 4141-4253 constitute a Nsp9 ssRNA-binding domain; sequence NNELSPVALR…GSLAATVRLQ (113 aa). One can recognise an ExoN/MTase coactivator domain in the interval 4254-4392; the sequence is AGNATEVPAN…CDQLREPMLQ (139 aa). Cys-4327, Cys-4330, His-4336, Cys-4343, Cys-4370, Cys-4373, Cys-4381, and Cys-4383 together coordinate Zn(2+). In terms of domain architecture, NiRAN spans 4399-4653; that stretch reads FLNRVCGVSA…TAESHVDTDL (255 aa). The LRR 7 repeat unit spans residues 4591–4616; the sequence is AGIVGVLTLDNQDLNGNWYDFGDFIQ. Positions 4601 and 4610 each coordinate Mn(2+). Positions 4658–4756 constitute a Nsp12 Interface domain; sequence IKWDLLKYDF…HNQDVNLHSS (99 aa). Zn(2+)-binding residues include His-4687, Cys-4693, Cys-4698, Cys-4702, and Cys-4879. Positions 4757–5324 constitute a Nsp12 RNA-dependent RNA polymerase domain; sequence RLSFKELLVY…AMYTPHTVLQ (568 aa). The interval 4759–4973 is rdRp Fingers N-ter; it reads SFKELLVYAA…HQKLLKSIAA (215 aa). Residues 4937–4947 form an interaction with RMP Remdesivir region; the sequence is KYAISAKNRAR. A rdRp Palm N-ter region spans residues 4974 to 5012; sequence TRGATVVIGTSKFYGGWHNMLKTVYSDVENPHLMGWDYP. One can recognise a RdRp catalytic domain in the interval 5004–5166; that stretch reads PHLMGWDYPK…CFNSTYASQG (163 aa). Residues 5013–5071 are rdRp Fingers C-ter; the sequence is KCDRAMPNMLRIMASLVLARKHTTCCSLSHRFYRLANECAQVLSEMVMCGGSLYVKPGG. Residues His-5034, Cys-5037, and Cys-5038 each coordinate Zn(2+). Positions 5072 to 5207 are rdRp Palm C-ter; it reads TSSGDATTAY…TKGPHEFCSQ (136 aa). Catalysis depends on residues Ser-5151, Asp-5152, and Asp-5153. The segment at 5208–5324 is rdRp Thumb; sequence HTMLVKQGDD…AMYTPHTVLQ (117 aa). Residues 5325 to 5437 form the CV ZBD domain; sequence AVGACVLCNS…TDFNAIATCD (113 aa). Zn(2+) is bound by residues Cys-5329, Cys-5332, Cys-5340, Cys-5343, Cys-5350, Cys-5353, His-5357, His-5363, Cys-5374, Cys-5379, Cys-5396, and His-5399. An LRR 8 repeat occupies 5552–5572; the sequence is TSHTVMPLSAPTLVPQEHYVR. The (+)RNA virus helicase ATP-binding domain maps to 5581 to 5762; that stretch reads NISDEFSSNV…MKTIGPDMFL (182 aa). 5606-5613 provides a ligand contact to a ribonucleoside 5'-triphosphate; the sequence is GPPGTGKS. Residues 5763–5932 enclose the (+)RNA virus helicase C-terminal domain; the sequence is GTCRRCPAEI…TLQAENVTGL (170 aa). Positions 5997–6212 constitute an ExoN domain; it reads MFITREEAIR…RCLAVHECFV (216 aa). Active-site residues include Asp-6015, Glu-6017, and Glu-6116. Residues Asp-6015, Glu-6017, and Glu-6116 each contribute to the Mg(2+) site. Cys-6132, Cys-6135, Cys-6151, His-6154, His-6182, Cys-6186, and His-6189 together coordinate Zn(2+). Residues His-6193 and Asp-6198 contribute to the active site. Mg(2+) is bound by residues His-6193 and Asp-6198. A Zn(2+)-binding site is contributed by Cys-6204. The 232-residue stretch at 6221–6452 folds into the N7-MTase domain; sequence YPIIGDELKI…NLWNTFTRLQ (232 aa). 6256 to 6262 contributes to the S-adenosyl-L-methionine binding site; sequence DIGNPKA. Positions 6339–6353 are gpppA-binding; that stretch reads CDGGSLYVNKHAFHT. 4 residues coordinate Zn(2+): Cys-6377, Cys-6402, Cys-6409, and His-6412. The 61-residue stretch at 6453–6513 folds into the Nsp15 N-terminal oligomerization domain; the sequence is SLENVAFNVV…NVAFELWAKR (61 aa). Positions 6514-6639 constitute an AV-Nsp11N/CoV-Nsp15M domain; sequence NIKPVPEVKI…YYKKVDGVVQ (126 aa). The 140-residue stretch at 6656-6795 folds into the NendoU domain; that stretch reads KPRSQMEIDF…KDGHVETFYP (140 aa). The active-site Proton donor; for uridylate-specific endoribonuclease nsp15 activity is His-6686. The Proton acceptor; for uridylate-specific endoribonuclease nsp15 activity role is filled by His-6701. Catalysis depends on Lys-6741, which acts as the For uridylate-specific endoribonuclease nsp15 activity. Uracil is bound by residues 6741-6745 and 6792-6796; these read KCVCS and TFYPK. One can recognise a Nidovirus-type SAM-dependent 2'-O-MTase domain in the interval 6800–7094; it reads SQAWQPGVAM…RVVISSDVLV (295 aa). An LRR 9 repeat occupies 6817 to 6841; it reads RMLLEKCDLQNYGDSATLPKGIMMN. Catalysis depends on residues Lys-6844, Asp-6928, Lys-6968, and Glu-7001.

It belongs to the coronaviruses polyprotein 1ab family. Interacts with host GIGYF2. In terms of assembly, may form homohexamers. Interacts with N protein. As to quaternary structure, 3CL-PRO exists as monomer and homodimer. Only the homodimer shows catalytic activity. Interacts with host FBXO22; this interaction promotes the proteasomal degradation of nsp5. Interacts with PL-PRO and nsp6. In terms of assembly, forms homodimers. Interacts with host ZFYVE1 (DFCP1), which leads to ER and DMVs binding to lipid droplets. Interacts with host TBK1; this interaction decreases IRF3 phosphorylation by 57%, which leads to reduced IFN-beta production. As to quaternary structure, interacts with nsp8 and nsp12 to form the replication-transcription complex (RTC): nsp12, nsp7, two subunits of nsp8, and up to two subunits of nsp13. Eight copies of nsp7 and eight copies of nsp8 assemble to form a heterohexadecamer dsRNA-encircling ring structure. Interacts with nsp7, nsp13 and nsp12 to form the replication-transcription complex (RTC): nsp12, nsp7, two subunits of nsp8, and up to two subunits of nsp13. Eight copies of nsp7 and eight copies of nsp8 assemble to form a heterohexadecamer dsRNA-encircling ring structure. In terms of assembly, is a dimer. Interacts with NSP12. Interacts with host SND1. As to quaternary structure, forms a dodecamer and interacts with nsp14 and nsp16; these interactions enhance nsp14 and nsp16 enzymatic activities. Interacts with nsp7 and nsp8 to form the replication-transcription complex (RTC): nsp12, nsp7, two subunits of nsp8, and up to two subunits of nsp13. Interacts with nsp9. In terms of assembly, interacts with nsp8 to form the replication-transcription complex (RTC): nsp12, nsp7, two subunits of nsp8, and up to two subunits of nsp13. Interacts with host TBK1; this interaction inhibits TBK1 phosphorylation and decreases by 75% IRF3 phosphorylation, which leads to reduced IFN-beta production. As to quaternary structure, interacts (via N-terminus) with DDX1. Interacts with nsp10. Homohexamer. In terms of assembly, interacts with nsp10. Mn(2+) serves as cofactor. Requires Mg(2+) as cofactor. Specific enzymatic cleavages in vivo by its own proteases yield mature proteins. 3CL-PRO and PL-PRO proteinases are autocatalytically processed.

The protein localises to the host cytoplasm. It localises to the host endosome. Its subcellular location is the host endoplasmic reticulum membrane. The protein resides in the host Golgi apparatus. It is found in the host nucleus. The protein localises to the host perinuclear region. It localises to the host endoplasmic reticulum. Its subcellular location is the host endoplasmic reticulum-Golgi intermediate compartment. The enzyme catalyses RNA(n) + a ribonucleoside 5'-triphosphate = RNA(n+1) + diphosphate. It carries out the reaction ATP + H2O = ADP + phosphate + H(+). It catalyses the reaction TSAVLQ-|-SGFRK-NH2 and SGVTFQ-|-GKFKK the two peptides corresponding to the two self-cleavage sites of the SARS 3C-like proteinase are the two most reactive peptide substrates. The enzyme exhibits a strong preference for substrates containing Gln at P1 position and Leu at P2 position.. The catalysed reaction is Thiol-dependent hydrolysis of ester, thioester, amide, peptide and isopeptide bonds formed by the C-terminal Gly of ubiquitin (a 76-residue protein attached to proteins as an intracellular targeting signal).. The enzyme catalyses a 5'-end (N(7)-methyl 5'-triphosphoguanosine)-ribonucleoside in mRNA + S-adenosyl-L-methionine = a 5'-end (N(7)-methyl 5'-triphosphoguanosine)-(2'-O-methyl-ribonucleoside) in mRNA + S-adenosyl-L-homocysteine + H(+). It carries out the reaction uridylyl-uridylyl-ribonucleotide-RNA = a 3'-end uridylyl-2',3'-cyclophospho-uridine-RNA + a 5'-end dephospho-ribonucleoside-RNA. It catalyses the reaction a 5'-end diphospho-ribonucleoside in mRNA + GTP + H(+) = a 5'-end (5'-triphosphoguanosine)-ribonucleoside in mRNA + diphosphate. The catalysed reaction is a 5'-end (5'-triphosphoguanosine)-ribonucleoside in mRNA + S-adenosyl-L-methionine = a 5'-end (N(7)-methyl 5'-triphosphoguanosine)-ribonucleoside in mRNA + S-adenosyl-L-homocysteine. Its activity is regulated as follows. Inhibited in vitro by GRL-0617. Inhibited ex vivo by K22. It may shift NSP6 zippering activity towards the nuclear envelope, thereby impairing formation of the NSP6-compartment necessary for viral transcription/replication. With respect to regulation, inhibited by Remdesivir antiviral drug (GS-5734). Its activity is regulated as follows. Inhibited by Remdesivir antiviral drug (GS-5734) through non-obligate RNA chain termination. Inhibited by pyridone-containing alpha-ketoamides compounds 13a and 13b. In turn, alpha-ketoamide 13b (tert-butyl (1-((S)-1-(((S)-4-(benzylamino)-3,4-dioxo-1-((S)-2-oxopyrrolidin-3-yl)butan-2-yl)amino)-3-cyclopropyl-1-oxopropan-2-yl)-2-oxo-1,2-dihydropyridin-3-yl)carbamate) inhibits SARS-CoV-2 replication in human lung cells. Inhibited ex vivo by michael acceptor inhibitor N3. Inhibited ex vivo by compound 11a and 11b. Its function is as follows. Multifunctional protein involved in the transcription and replication of viral RNAs. Contains the proteinases responsible for the cleavages of the polyprotein. In terms of biological role, inhibits host translation by associating with the open head conformation of the 40S subunit. The C-terminus binds to and obstructs ribosomal mRNA entry tunnel. Thereby inhibits antiviral response triggered by innate immunity or interferons. The nsp1-40S ribosome complex further induces an endonucleolytic cleavage near the 5'UTR of host mRNAs, targeting them for degradation. This inhibits the integrated stress response (ISR) in the infected cell by preventing EIF2S1/eIF2-alpha phosphorylation upstream of stress granule formation and depletes host G3BP1. Viral mRNAs less susceptible to nsp1-mediated inhibition of translation, because of their 5'-end leader sequence. Enhances mRNA repression of the 4EHP-GYF2 complex in the host, thereby inhibiting the antiviral response and facilitating SARS-CoV-2 replication. Possibly acts in cooperation with nsp1, which induces ribosome stalling on host mRNA, triggering mRNA repression by the host 4EHP-GYF2 complex which is enhanced by nsp2. Functionally, responsible for the cleavages located at the N-terminus of the replicase polyprotein. Participates together with nsp4 in the assembly of virally-induced cytoplasmic double-membrane vesicles necessary for viral replication. Antagonizes innate immune induction of type I interferon by blocking the phosphorylation, dimerization and subsequent nuclear translocation of host IRF3. Also prevents host NF-kappa-B signaling. In addition, PL-PRO possesses a deubiquitinating/deISGylating activity and processes both 'Lys-48'- and 'Lys-63'-linked polyubiquitin chains from cellular substrates. Cleaves preferentially ISG15 from antiviral protein IFIH1 (MDA5), but not RIGI. Can play a role in host ADP-ribosylation by ADP-ribose. Plays a role in the formation and maintenance of double membrane vesicles (DMVs) replication organelles. DMVs are formed by nsp3 and nsp4, while nsp6 zippers ER membranes and connects to lipid droplets. Its function is as follows. Plays a role in the formation and maintenance of double membrane vesicles (DMVs) replication organelles. DMVs are formed by nsp3 and nsp4, while nsp6 zippers ER membranes and connects to lipid droplets. In terms of biological role, cleaves the C-terminus of replicase polyprotein at 11 sites. Recognizes substrates containing the core sequence [ILMVF]-Q-|-[SGACN]. Cleaves and inactivates human TRMT1, preventing tRNA guanine(26)-dimethylation of tRNAs. May cleave human NLRP1 in lung epithelial cells, thereby activating the NLRP1 inflammasome pathway. May cleave human GSDMD, triggering alternative GSDME-mediated epithelial cell death upon activation of the NLRP1 inflammasome, which may enhance the release interleukins 1B, 6, 16 and 18. Also able to bind an ADP-ribose-1''-phosphate (ADRP). Plays a role in the formation and maintenance of double membrane vesicles (DMVs) replication organelles. DMVs are formed by nsp3 and nsp4, while nsp6 zippers ER membranes and connects to lipid droplets. LDs are consumed during DMV formation. Binds to host TBK1 without affecting TBK1 phosphorylation; the interaction with TBK1 decreases IRF3 phosphorylation, which leads to reduced IFN-beta production. Functionally, plays a role in viral RNA synthesis. Forms a hexadecamer with nsp8 (8 subunits of each) that may participate in viral replication by acting as a primase. Alternatively, may synthesize substantially longer products than oligonucleotide primers. Its function is as follows. Plays a role in viral RNA synthesis. Forms a hexadecamer with nsp7 (8 subunits of each) that may participate in viral replication by acting as a primase. Alternatively, may synthesize substantially longer products than oligonucleotide primers. Interacts with ribosome signal recognition particle RNA (SRP). Together with NSP9, suppress protein integration into the cell membrane, thereby disrupting host immune defenses. In terms of biological role, forms a primer, NSP9-pU, which is utilized by the polymerase for the initiation of RNA chains. Interacts with ribosome signal recognition particle RNA (SRP). Together with NSP8, suppress protein integration into the cell membrane, thereby disrupting host immune defenses. Plays a pivotal role in viral transcription by stimulating both nsp14 3'-5' exoribonuclease and nsp16 2'-O-methyltransferase activities. Therefore plays an essential role in viral mRNAs cap methylation. Functionally, RNA-directed RNA polymerase that catalyzes the transcription of viral genomic and subgenomic RNAs. Acts in complex with nsp7 and nsp8 to transcribe both the minus and positive strands of genomic RNA. The kinase-like NiRAN domain of NSP12 attaches one or more nucleotides to the amino terminus of NSP9, forming a covalent RNA-protein intermediate that serves as transcription/replication primer. Subgenomic RNAs (sgRNAs) are formed by discontinuous transcription: The polymerase has the ability to pause at transcription-regulating sequences (TRS) and jump to the leader TRS, resulting in a major deletion. This creates a series of subgenomic RNAs that are replicated, transcribed and translated. In addition, Nsp12 is a subunit of the viral RNA capping enzyme that catalyzes the RNA guanylyltransferase reaction for genomic and sub-genomic RNAs. Subsequently, the NiRAN domain transfers RNA to GDP, and forms the core cap structure GpppA-RNA. Its function is as follows. Plays a role in viral RNA synthesis. Multi-functional protein with a zinc-binding domain in N-terminus displaying RNA and DNA duplex-unwinding activities with 5' to 3' polarity. Activity of helicase is dependent on magnesium. Binds to host TBK1 and inhibits TBK1 phosphorylation; the interaction with TBK1 decreases IRF3 phosphorylation, which leads to reduced IFN-beta production. In terms of biological role, plays a role in viral RNA synthesis through two distinct activities. The N7-guanine methyltransferase activity plays a role in the formation of the cap structure GpppA-RNA. The proofreading exoribonuclease reduces the sensitivity of the virus to RNA mutagens during replication. This activity acts on both ssRNA and dsRNA in a 3'-5' direction. Plays a role in viral transcription/replication and prevents the simultaneous activation of host cell dsRNA sensors, such as MDA5/IFIH1, OAS, and PKR. Acts by degrading the 5'-polyuridines generated during replication of the poly(A) region of viral genomic and subgenomic RNAs. Catalyzes a two-step reaction in which a 2'3'-cyclic phosphate (2'3'-cP) is first generated by 2'-O transesterification, which is then hydrolyzed to a 3'-phosphate (3'-P). If not degraded, poly(U) RNA would hybridize with poly(A) RNA tails and activate host dsRNA sensors. May bind genomic dsRNA in association with the replication-transcription complex (RTC), and play a role in nsp12 discontinous transcription. Functionally, methyltransferase that mediates mRNA cap 2'-O-ribose methylation to the 5'-cap structure of viral mRNAs. N7-methyl guanosine cap is a prerequisite for binding of nsp16. Therefore, it plays an essential role in cap methylation of viral mRNAs, which is essential to evade the immune system, especially when restricted by human IFIT1 and IFIT3. May disrupt host mRNA splicing in nucleus by interacting with pre-mRNA Recognition Domains of the U1 and U2 snRNAs. The chain is Replicase polyprotein 1ab (rep) from Homo sapiens (Human).